We begin with the raw amino-acid sequence, 317 residues long: Small ribosomal subunit protein RACK1 (317 aa).

WD repeat units lie at residues 15–55 (GHNG…DNQY), 64–103 (GHSHIVQDVTISADGAYALSASWDRTLRLWDLETGETTQR), 106–146 (GHKG…ATLT), 148–188 (HNDW…VNAD), 191–230 (GHTGYISCITLSPDGSLCASAGKDGVIILWDLNKNKTLYT), 232–272 (EAKA…DELK), and 281–317 (AKDPEAISLAWSADGQNLFAGYTDNVIRVWQVMTPSA).

It belongs to the WD repeat G protein beta family. Ribosomal protein RACK1 subfamily. In terms of assembly, component of the small ribosomal subunit. Mature ribosomes consist of a small (40S) and a large (60S) subunit. The 40S subunit contains about 32 different proteins and 1 molecule of RNA (18S). The 60S subunit contains 45 different proteins and 3 molecules of RNA (25S, 5.8S and 5S).

The protein resides in the cytoplasm. Its function is as follows. Component of the ribosome, a large ribonucleoprotein complex responsible for the synthesis of proteins in the cell. The small ribosomal subunit (SSU) binds messenger RNAs (mRNAs) and translates the encoded message by selecting cognate aminoacyl-transfer RNA (tRNA) molecules. The large subunit (LSU) contains the ribosomal catalytic site termed the peptidyl transferase center (PTC), which catalyzes the formation of peptide bonds, thereby polymerizing the amino acids delivered by tRNAs into a polypeptide chain. The nascent polypeptides leave the ribosome through a tunnel in the LSU and interact with protein factors that function in enzymatic processing, targeting, and the membrane insertion of nascent chains at the exit of the ribosomal tunnel. Located at the head of the 40S ribosomal subunit in the vicinity of the mRNA exit channel, it serves as a scaffold protein that can recruit other proteins to the ribosome. Involved in the negative regulation of translation of a specific subset of proteins. Plays a role in morphogenesis and pathogenesis. This chain is Small ribosomal subunit protein RACK1, found in Candida albicans (strain SC5314 / ATCC MYA-2876) (Yeast).